Reading from the N-terminus, the 128-residue chain is B2 protein (128 aa).

The N-terminal stretch at 1–10 (SLILLVAVQA) is a signal peptide. 2 cysteine pairs are disulfide-bonded: Cys-26-Cys-57 and Cys-97-Cys-114.

The protein belongs to the PBP/GOBP family. In terms of processing, N-glycosylated. Tubular accessory sex gland.

The protein localises to the secreted. May be a carrier protein for lipids. This is B2 protein from Tenebrio molitor (Yellow mealworm beetle).